Here is a 535-residue protein sequence, read N- to C-terminus: Bifunctional purine biosynthesis protein PurH (535 aa).

Residues 1 to 148 (MNNARPIRRA…KNHKDTTIIV (148 aa)) form the MGS-like domain.

Belongs to the PurH family.

It carries out the reaction (6R)-10-formyltetrahydrofolate + 5-amino-1-(5-phospho-beta-D-ribosyl)imidazole-4-carboxamide = 5-formamido-1-(5-phospho-D-ribosyl)imidazole-4-carboxamide + (6S)-5,6,7,8-tetrahydrofolate. The catalysed reaction is IMP + H2O = 5-formamido-1-(5-phospho-D-ribosyl)imidazole-4-carboxamide. It functions in the pathway purine metabolism; IMP biosynthesis via de novo pathway; 5-formamido-1-(5-phospho-D-ribosyl)imidazole-4-carboxamide from 5-amino-1-(5-phospho-D-ribosyl)imidazole-4-carboxamide (10-formyl THF route): step 1/1. The protein operates within purine metabolism; IMP biosynthesis via de novo pathway; IMP from 5-formamido-1-(5-phospho-D-ribosyl)imidazole-4-carboxamide: step 1/1. This is Bifunctional purine biosynthesis protein PurH from Shewanella woodyi (strain ATCC 51908 / MS32).